A 126-amino-acid chain; its full sequence is Large ribosomal subunit protein bL12 (126 aa).

Belongs to the bacterial ribosomal protein bL12 family. As to quaternary structure, homodimer. Part of the ribosomal stalk of the 50S ribosomal subunit. Forms a multimeric L10(L12)X complex, where L10 forms an elongated spine to which 2 to 4 L12 dimers bind in a sequential fashion. Binds GTP-bound translation factors.

Forms part of the ribosomal stalk which helps the ribosome interact with GTP-bound translation factors. Is thus essential for accurate translation. The sequence is that of Large ribosomal subunit protein bL12 from Streptococcus pyogenes serotype M28 (strain MGAS6180).